We begin with the raw amino-acid sequence, 134 residues long: Glycine cleavage system H protein (134 aa).

Residues 24 to 106 (TVRVGITDYA…YGAGWLLDIQ (83 aa)) form the Lipoyl-binding domain. An N6-lipoyllysine modification is found at Lys65.

Belongs to the GcvH family. As to quaternary structure, the glycine cleavage system is composed of four proteins: P, T, L and H. (R)-lipoate is required as a cofactor.

The glycine cleavage system catalyzes the degradation of glycine. The H protein shuttles the methylamine group of glycine from the P protein to the T protein. In Mycobacterium bovis (strain ATCC BAA-935 / AF2122/97), this protein is Glycine cleavage system H protein.